The chain runs to 213 residues: Lysozyme g-like protein 2 (213 aa).

Residues 1–19 (MVPSVVFWGLIALVGTAKG) form the signal peptide. Disulfide bonds link Cys-40-Cys-93 and Cys-54-Cys-62. Glu-106 is an active-site residue.

This sequence belongs to the glycosyl hydrolase 23 family.

The protein localises to the secreted. May act as a potent antibacterial protein that may play a role in the innate immunity. The polypeptide is Lysozyme g-like protein 2 (Lyg2) (Mus musculus (Mouse)).